The chain runs to 118 residues: Large ribosomal subunit protein bL20 (118 aa).

The protein belongs to the bacterial ribosomal protein bL20 family.

In terms of biological role, binds directly to 23S ribosomal RNA and is necessary for the in vitro assembly process of the 50S ribosomal subunit. It is not involved in the protein synthesizing functions of that subunit. This is Large ribosomal subunit protein bL20 from Pseudomonas fluorescens (strain SBW25).